Consider the following 262-residue polypeptide: Phosphate import ATP-binding protein PstB (262 aa).

The region spanning 15–257 (AKASNLNLWY…PQKSKTEQYI (243 aa)) is the ABC transporter domain. 47–54 (GPSGCGKS) serves as a coordination point for ATP.

This sequence belongs to the ABC transporter superfamily. Phosphate importer (TC 3.A.1.7) family. In terms of assembly, the complex is composed of two ATP-binding proteins (PstB), two transmembrane proteins (PstC and PstA) and a solute-binding protein (PstS).

The protein localises to the cell inner membrane. The enzyme catalyses phosphate(out) + ATP + H2O = ADP + 2 phosphate(in) + H(+). Part of the ABC transporter complex PstSACB involved in phosphate import. Responsible for energy coupling to the transport system. This chain is Phosphate import ATP-binding protein PstB, found in Wolinella succinogenes (strain ATCC 29543 / DSM 1740 / CCUG 13145 / JCM 31913 / LMG 7466 / NCTC 11488 / FDC 602W) (Vibrio succinogenes).